A 340-amino-acid chain; its full sequence is Glycerol-3-phosphate dehydrogenase [NAD(P)+] (340 aa).

Residues S15, Y16, H36, and K110 each contribute to the NADPH site. 3 residues coordinate sn-glycerol 3-phosphate: K110, G139, and T141. A143 serves as a coordination point for NADPH. Residues K195, D248, S258, R259, and N260 each coordinate sn-glycerol 3-phosphate. K195 functions as the Proton acceptor in the catalytic mechanism. An NADPH-binding site is contributed by R259. 2 residues coordinate NADPH: V283 and E285.

Belongs to the NAD-dependent glycerol-3-phosphate dehydrogenase family.

The protein localises to the cytoplasm. The catalysed reaction is sn-glycerol 3-phosphate + NAD(+) = dihydroxyacetone phosphate + NADH + H(+). The enzyme catalyses sn-glycerol 3-phosphate + NADP(+) = dihydroxyacetone phosphate + NADPH + H(+). The protein operates within membrane lipid metabolism; glycerophospholipid metabolism. Functionally, catalyzes the reduction of the glycolytic intermediate dihydroxyacetone phosphate (DHAP) to sn-glycerol 3-phosphate (G3P), the key precursor for phospholipid synthesis. The protein is Glycerol-3-phosphate dehydrogenase [NAD(P)+] of Baumannia cicadellinicola subsp. Homalodisca coagulata.